The following is a 261-amino-acid chain: Undecaprenyl-diphosphatase (261 aa).

8 helical membrane-spanning segments follow: residues 1–21, 40–60, 79–99, 106–126, 140–160, 185–205, 210–230, and 239–259; these read MTVL…FLPI, GLTF…AYFW, GRLF…GVLF, IFRS…GLWW, VNLF…IPGV, FLMS…ELPL, LAFI…IKFL, and YLLF…VFWL.

This sequence belongs to the UppP family.

It is found in the cell membrane. It catalyses the reaction di-trans,octa-cis-undecaprenyl diphosphate + H2O = di-trans,octa-cis-undecaprenyl phosphate + phosphate + H(+). Its function is as follows. Catalyzes the dephosphorylation of undecaprenyl diphosphate (UPP). Confers resistance to bacitracin. The chain is Undecaprenyl-diphosphatase from Moorella thermoacetica (strain ATCC 39073 / JCM 9320).